The sequence spans 95 residues: MSFKPLYDRIAIKPIEHEEKTKGGIIIPDTAKEKPMQGEVVAVGKGVRNEKGEVHPLELKVGDKVLYGKWAGTEIKVKGEDLIVMKESDVFGIIN.

Belongs to the GroES chaperonin family. As to quaternary structure, heptamer of 7 subunits arranged in a ring. Interacts with the chaperonin GroEL.

It is found in the cytoplasm. In terms of biological role, together with the chaperonin GroEL, plays an essential role in assisting protein folding. The GroEL-GroES system forms a nano-cage that allows encapsulation of the non-native substrate proteins and provides a physical environment optimized to promote and accelerate protein folding. GroES binds to the apical surface of the GroEL ring, thereby capping the opening of the GroEL channel. The protein is Co-chaperonin GroES of Rickettsia bellii (strain RML369-C).